The sequence spans 1674 residues: Kinesin-like protein KIF14 (1674 aa).

A required for PRC1-binding region spans residues methionine 1–asparagine 391. Disordered regions lie at residues glutamate 132–asparagine 158 and lysine 171–asparagine 374. Composition is skewed to polar residues over residues glycine 142–arginine 151 and serine 202–alanine 214. Serine 257 is modified (phosphoserine). Position 262 is a phosphothreonine (threonine 262). A compositionally biased stretch (basic and acidic residues) spans valine 267–proline 279. Over residues threonine 302–arginine 311 the composition is skewed to polar residues. Residues valine 317–proline 329 show a composition bias toward basic and acidic residues. Residues asparagine 391–aspartate 772 form a required for microtubule-binding with high affinity region. A Kinesin motor domain is found at glutamine 393–isoleucine 736. Glycine 482–serine 489 contributes to the ATP binding site. Residues asparagine 743 to glycine 826 adopt a coiled-coil conformation. Positions threonine 860 to isoleucine 911 constitute an FHA domain. The interval proline 936 to valine 1674 is required for CIT-binding. Residues glutamate 961–asparagine 1110 are a coiled coil. Residues serine 973 and serine 1326 each carry the phosphoserine modification. The disordered stretch occupies residues glycine 1618–valine 1674. Positions serine 1630–cysteine 1642 are enriched in basic and acidic residues. Over residues alanine 1660–valine 1674 the composition is skewed to polar residues.

Belongs to the TRAFAC class myosin-kinesin ATPase superfamily. Kinesin family. As to quaternary structure, directly interacts with PRC1 within a complex also containing KIF4A, KIF20A and KIF23; targets to the central spindle. Directly interacts with CIT depending on the activation state of the kinase (stronger interaction with the kinase-dead form); targets to the midbody. Interacts with ARRB2; the interaction is detected in the nucleus upon OR1D2 stimulation. Interacts with AKT1; the interaction is detected in the plasma membrane upon INS stimulation and promotes AKT1 phosphorylation. Interacts with SVIL; at midbody during cytokinesis. Interacts with RADIL (via PDZ domain); recruits RADIL to the microtubule network restricting RADIL from interaction with activated RAP1A.

Its subcellular location is the nucleus. The protein localises to the cytoplasm. It is found in the cytoskeleton. It localises to the spindle. The protein resides in the midbody. Microtubule motor protein that binds to microtubules with high affinity through each tubulin heterodimer and has an ATPase activity. Plays a role in many processes like cell division, cytokinesis and also in cell proliferation and apoptosis. During cytokinesis, targets to central spindle and midbody through its interaction with PRC1 and CIT respectively. Regulates cell growth through regulation of cell cycle progression and cytokinesis. During cell cycle progression acts through SCF-dependent proteasomal ubiquitin-dependent protein catabolic process which controls CDKN1B degradation, resulting in positive regulation of cyclins, including CCNE1, CCND1 and CCNB1. During late neurogenesis, regulates the cerebellar and cerebral cortex development and olfactory bulb development through regulation of apoptosis, cell proliferation and cell division. Also is required for chromosome congression and alignment during mitotic cell cycle process. Regulates cell spreading, focal adhesion dynamics, and cell migration through its interaction with RADIL resulting in regulation of RAP1A-mediated inside-out integrin activation by tethering RADIL on microtubules. The chain is Kinesin-like protein KIF14 from Mus musculus (Mouse).